Reading from the N-terminus, the 455-residue chain is UPF0053 protein MT1890 (455 aa).

The CNNM transmembrane domain occupies 2–205 (NLTDTVATIL…ARSGALDDAT (204 aa)). Transmembrane regions (helical) follow at residues 6-26 (TVAT…FVAA), 68-88 (LGIS…VAEL), 106-126 (LITF…GELV), and 148-168 (LFSL…NWIV). 2 consecutive CBS domains span residues 224–285 (MTPR…AHTL) and 286–346 (LTTV…VRDE).

It belongs to the UPF0053 family.

The protein resides in the cell membrane. The protein is UPF0053 protein MT1890 of Mycobacterium tuberculosis (strain CDC 1551 / Oshkosh).